The following is a 592-amino-acid chain: MFGRTYYCGEITEKAIGETVVLKGWVQKRRDLGGLIFIDLRDRTGIVQVVFNPDVSKDALETAESIRSEYVLDITGKVVAREEATVNPNLKTGRIEIQAESVDVLSAAKTPPFAISDQAAEVSEDIRLKHRYLDLRRPEMFNSLKMRHNVTKAVRRFLDDNGFLDIETPVLTKSTPEGARDYLVPSRVHEGEFYALPQSPQIFKQLLMVSGFDRYYQIARCFRDEDLRADRQPEFTQIDIEMSFMSQEDIMKLSEEMMAHVMRETHGIEISLPLPRMSYEDAMNRYGSDKPDTRFGMLLTDVSEAVKDSDFKVFASAVANGGAVKAINVKGAAANYSRKDIDALGEFAANYGAKGLAWLKTEADGLKGPIAKFFAGEKQEALVQALDAADGDLLLFVADKLEVANDALGALRLKLGKELNLIDESLFNFLWVVDWPLLEYDAEEGRYYAAHHPFTMPVREDLKLIETNPQDMKAQAYDLVLNGYELGGGSIRIFEKDVQEKMFGLLGFSEEEAKEQFGFLLEAFDYGAPPHGGIALGLDRLVMLLSGRTNLRDTIAFPKTASASCLMTEAPSEVDNAQLDELHLEIKRKIRQ.

Glu-177 is an L-aspartate binding site. An aspartate region spans residues 201–204 (QIFK). An L-aspartate-binding site is contributed by Arg-223. ATP contacts are provided by residues 223–225 (RDE) and Gln-232. His-451 contributes to the L-aspartate binding site. Glu-485 serves as a coordination point for ATP. Arg-492 is a binding site for L-aspartate. 537–540 (GLDR) is a binding site for ATP.

The protein belongs to the class-II aminoacyl-tRNA synthetase family. Type 1 subfamily. Homodimer.

Its subcellular location is the cytoplasm. The enzyme catalyses tRNA(Asp) + L-aspartate + ATP = L-aspartyl-tRNA(Asp) + AMP + diphosphate. In terms of biological role, catalyzes the attachment of L-aspartate to tRNA(Asp) in a two-step reaction: L-aspartate is first activated by ATP to form Asp-AMP and then transferred to the acceptor end of tRNA(Asp). This chain is Aspartate--tRNA ligase, found in Bacillus licheniformis (strain ATCC 14580 / DSM 13 / JCM 2505 / CCUG 7422 / NBRC 12200 / NCIMB 9375 / NCTC 10341 / NRRL NRS-1264 / Gibson 46).